Here is a 227-residue protein sequence, read N- to C-terminus: MAYPFQLGLQDATSPIMEELTSFHDHTLMIVFLISSLVLYIILLMLTTKLTHTSTMDAQEVETIWTILPAVILILIALPSLRILYMMDEINNPALTVKTMGHQWYWSYEYTDYEDLCFDSYMIPTNDLKPGELRLLEVDNRVVLPMELPIRMLISSEDVLHSWAVPSLGLKTDAIPGRLNQATVTSNRPGLFYGQCSEICGSNHSFMPIVLEMVPLKHFENWSASMI.

The Mitochondrial intermembrane segment spans residues 1 to 14 (MAYPFQLGLQDATS). Residues 15–45 (PIMEELTSFHDHTLMIVFLISSLVLYIILLM) form a helical membrane-spanning segment. Topologically, residues 46-59 (LTTKLTHTSTMDAQ) are mitochondrial matrix. A helical membrane pass occupies residues 60-87 (EVETIWTILPAVILILIALPSLRILYMM). Residues 88-227 (DEINNPALTV…HFENWSASMI (140 aa)) lie on the Mitochondrial intermembrane side of the membrane. Cu cation is bound by residues histidine 161, cysteine 196, glutamate 198, cysteine 200, histidine 204, and methionine 207. A Mg(2+)-binding site is contributed by glutamate 198.

Belongs to the cytochrome c oxidase subunit 2 family. As to quaternary structure, component of the cytochrome c oxidase (complex IV, CIV), a multisubunit enzyme composed of 14 subunits. The complex is composed of a catalytic core of 3 subunits MT-CO1, MT-CO2 and MT-CO3, encoded in the mitochondrial DNA, and 11 supernumerary subunits COX4I, COX5A, COX5B, COX6A, COX6B, COX6C, COX7A, COX7B, COX7C, COX8 and NDUFA4, which are encoded in the nuclear genome. The complex exists as a monomer or a dimer and forms supercomplexes (SCs) in the inner mitochondrial membrane with NADH-ubiquinone oxidoreductase (complex I, CI) and ubiquinol-cytochrome c oxidoreductase (cytochrome b-c1 complex, complex III, CIII), resulting in different assemblies (supercomplex SCI(1)III(2)IV(1) and megacomplex MCI(2)III(2)IV(2)). Found in a complex with TMEM177, COA6, COX18, COX20, SCO1 and SCO2. Interacts with TMEM177 in a COX20-dependent manner. Interacts with COX20. Interacts with COX16. It depends on Cu cation as a cofactor.

The protein localises to the mitochondrion inner membrane. The enzyme catalyses 4 Fe(II)-[cytochrome c] + O2 + 8 H(+)(in) = 4 Fe(III)-[cytochrome c] + 2 H2O + 4 H(+)(out). Component of the cytochrome c oxidase, the last enzyme in the mitochondrial electron transport chain which drives oxidative phosphorylation. The respiratory chain contains 3 multisubunit complexes succinate dehydrogenase (complex II, CII), ubiquinol-cytochrome c oxidoreductase (cytochrome b-c1 complex, complex III, CIII) and cytochrome c oxidase (complex IV, CIV), that cooperate to transfer electrons derived from NADH and succinate to molecular oxygen, creating an electrochemical gradient over the inner membrane that drives transmembrane transport and the ATP synthase. Cytochrome c oxidase is the component of the respiratory chain that catalyzes the reduction of oxygen to water. Electrons originating from reduced cytochrome c in the intermembrane space (IMS) are transferred via the dinuclear copper A center (CU(A)) of subunit 2 and heme A of subunit 1 to the active site in subunit 1, a binuclear center (BNC) formed by heme A3 and copper B (CU(B)). The BNC reduces molecular oxygen to 2 water molecules using 4 electrons from cytochrome c in the IMS and 4 protons from the mitochondrial matrix. The polypeptide is Cytochrome c oxidase subunit 2 (MT-CO2) (Anisomys imitator (Uneven-toothed rat)).